The following is a 256-amino-acid chain: Pyrroloquinoline-quinone synthase (256 aa).

Belongs to the PqqC family.

It catalyses the reaction 6-(2-amino-2-carboxyethyl)-7,8-dioxo-1,2,3,4,7,8-hexahydroquinoline-2,4-dicarboxylate + 3 O2 = pyrroloquinoline quinone + 2 H2O2 + 2 H2O + H(+). Its pathway is cofactor biosynthesis; pyrroloquinoline quinone biosynthesis. Ring cyclization and eight-electron oxidation of 3a-(2-amino-2-carboxyethyl)-4,5-dioxo-4,5,6,7,8,9-hexahydroquinoline-7,9-dicarboxylic-acid to PQQ. The polypeptide is Pyrroloquinoline-quinone synthase (Rhizobium meliloti (strain 1021) (Ensifer meliloti)).